The sequence spans 112 residues: Reprimo-like protein (112 aa).

The helical transmembrane segment at 59-79 (VVQIAVLCVLSLTVLFGIFFL) threads the bilayer.

Belongs to the reprimo family.

Its subcellular location is the membrane. In Xenopus laevis (African clawed frog), this protein is Reprimo-like protein (rprml).